Consider the following 464-residue polypeptide: 3-isopropylmalate dehydratase large subunit (464 aa).

Positions 337, 397, and 400 each coordinate [4Fe-4S] cluster.

The protein belongs to the aconitase/IPM isomerase family. LeuC type 1 subfamily. As to quaternary structure, heterodimer of LeuC and LeuD. It depends on [4Fe-4S] cluster as a cofactor.

It carries out the reaction (2R,3S)-3-isopropylmalate = (2S)-2-isopropylmalate. It functions in the pathway amino-acid biosynthesis; L-leucine biosynthesis; L-leucine from 3-methyl-2-oxobutanoate: step 2/4. Its function is as follows. Catalyzes the isomerization between 2-isopropylmalate and 3-isopropylmalate, via the formation of 2-isopropylmaleate. This chain is 3-isopropylmalate dehydratase large subunit, found in Bacillus cytotoxicus (strain DSM 22905 / CIP 110041 / 391-98 / NVH 391-98).